A 347-amino-acid polypeptide reads, in one-letter code: 3,4-dihydroxy-2-butanone 4-phosphate synthase (347 aa).

The tract at residues Met-1 to Gln-200 is DHBP synthase. D-ribulose 5-phosphate is bound by residues Arg-27–Glu-28, Asp-32, Arg-139–Thr-143, and Glu-163. Glu-28 contacts Mg(2+). His-142 lines the Mg(2+) pocket. Residues Asn-201–Leu-347 are GTP cyclohydrolase II-like.

The protein in the N-terminal section; belongs to the DHBP synthase family. This sequence in the C-terminal section; belongs to the GTP cyclohydrolase II family. Mg(2+) serves as cofactor. The cofactor is Mn(2+).

It carries out the reaction D-ribulose 5-phosphate = (2S)-2-hydroxy-3-oxobutyl phosphate + formate + H(+). Its pathway is cofactor biosynthesis; riboflavin biosynthesis; 2-hydroxy-3-oxobutyl phosphate from D-ribulose 5-phosphate: step 1/1. In terms of biological role, catalyzes the conversion of D-ribulose 5-phosphate to formate and 3,4-dihydroxy-2-butanone 4-phosphate. The sequence is that of 3,4-dihydroxy-2-butanone 4-phosphate synthase (ribB) from Wolinella succinogenes (strain ATCC 29543 / DSM 1740 / CCUG 13145 / JCM 31913 / LMG 7466 / NCTC 11488 / FDC 602W) (Vibrio succinogenes).